A 720-amino-acid polypeptide reads, in one-letter code: Phosphoribosylformylglycinamidine synthase subunit PurL (720 aa).

Histidine 34 is a catalytic residue. Tyrosine 37 serves as a coordination point for ATP. Glutamate 83 is a Mg(2+) binding site. Residues 84 to 87 and arginine 106 each bind substrate; that span reads SHNH. Histidine 85 acts as the Proton acceptor in catalysis. Aspartate 107 is a Mg(2+) binding site. Residue glutamine 231 participates in substrate binding. Mg(2+) is bound at residue aspartate 259. A substrate-binding site is contributed by 303–305; sequence ESQ. 2 residues coordinate ATP: aspartate 480 and glycine 517. Position 518 (asparagine 518) interacts with Mg(2+). Serine 520 provides a ligand contact to substrate.

It belongs to the FGAMS family. Monomer. Part of the FGAM synthase complex composed of 1 PurL, 1 PurQ and 2 PurS subunits.

It localises to the cytoplasm. The enzyme catalyses N(2)-formyl-N(1)-(5-phospho-beta-D-ribosyl)glycinamide + L-glutamine + ATP + H2O = 2-formamido-N(1)-(5-O-phospho-beta-D-ribosyl)acetamidine + L-glutamate + ADP + phosphate + H(+). Its pathway is purine metabolism; IMP biosynthesis via de novo pathway; 5-amino-1-(5-phospho-D-ribosyl)imidazole from N(2)-formyl-N(1)-(5-phospho-D-ribosyl)glycinamide: step 1/2. Its function is as follows. Part of the phosphoribosylformylglycinamidine synthase complex involved in the purines biosynthetic pathway. Catalyzes the ATP-dependent conversion of formylglycinamide ribonucleotide (FGAR) and glutamine to yield formylglycinamidine ribonucleotide (FGAM) and glutamate. The FGAM synthase complex is composed of three subunits. PurQ produces an ammonia molecule by converting glutamine to glutamate. PurL transfers the ammonia molecule to FGAR to form FGAM in an ATP-dependent manner. PurS interacts with PurQ and PurL and is thought to assist in the transfer of the ammonia molecule from PurQ to PurL. The sequence is that of Phosphoribosylformylglycinamidine synthase subunit PurL from Haloarcula marismortui (strain ATCC 43049 / DSM 3752 / JCM 8966 / VKM B-1809) (Halobacterium marismortui).